Consider the following 423-residue polypeptide: MQQEGGPVRSAPCRTGTLEGSRQGSPGHRKRASPKGSLSSAQPHSWMLTPSPLNSHCAHREPISSSPQPVANGPKQKKKSNWRSTTRLRIIRLRDRLEPRPLAILEDYADPFDVQETGEGSAGASGAPEKVPENDGYMEPYEAQKMMAEIRGSKETATQPLPLYDTPYEPEEDGATAEGEGAPWPRESRLPEDDERPPEEYDQPWEWKKERISKAFAVDIKVIKDLPWPPPVGQLDSSPSLPDGDRDISGPASPLPEPSLEDSSAQFEGPEKSCLSPGREEKGRLPPRLSAGNPKSAKPLSMEPSSPLGEWTDPALPLENQVWYHGAISRTDAENLLRLCKEASYLVRNSETSKNDFSLSLKSSQGFMHMKLSRTKEHKYVLGQNSPPFSSVPEIVHHYASRKLPIKGAEHMSLLYPVAIRTL.

Disordered regions lie at residues Met-1–Arg-87, Asp-110–Lys-208, and Asp-225–Thr-312. Residues Glu-192–Gln-203 show a composition bias toward acidic residues. Phosphotyrosine is present on Tyr-201. Positions Trp-323–Val-418 constitute an SH2 domain.

As to quaternary structure, interacts with phosphorylated 'Tyr-720' of PDGFRA via its SH2 domain. May become phosphorylated upon binding to PDGFRA. Expressed in skeletal muscle, brain, liver, prostate, testis, ovary, small intestine and colon.

In terms of biological role, adapter protein which may play a role in the regulation of apoptosis in response to PDGF. The protein is SH2 domain-containing adapter protein F of Homo sapiens (Human).